The following is a 419-amino-acid chain: Chaperone protein dnaJ 2 (419 aa).

The J domain occupies 14–75 (KFYEILGVPK…EKREIYDQYG (62 aa)). The CR-type zinc finger occupies 136–220 (GTTKKLSLSR…CKGEKVVSEK (85 aa)). Positions 149, 152, 165, 168, 192, 195, 208, and 211 each coordinate Zn(2+). CXXCXGXG motif repeat units follow at residues 149-156 (CSKCNGKG), 165-172 (CGGCQGSG), 192-199 (CNDCKGTG), and 208-215 (CPQCKGEK). Residues 378–391 (TTLHDVNIEDEMKR) show a composition bias toward basic and acidic residues. A disordered region spans residues 378 to 419 (TTLHDVNIEDEMKRKAQAQREAYDDDEEDHPGGAQRVQCAQQ). Cys416 is modified (cysteine methyl ester). Cys416 carries the S-farnesyl cysteine lipid modification. A propeptide spans 417–419 (AQQ) (removed in mature form).

It belongs to the DnaJ family. A/I subfamily. As to quaternary structure, homodimer. Zn(2+) serves as cofactor. In terms of processing, farnesylated. In terms of tissue distribution, expressed in both etiolated and light-grown tissues.

The protein resides in the membrane. Its function is as follows. Plays a continuous role in plant development probably in the structural organization of compartments. This chain is Chaperone protein dnaJ 2 (ATJ2), found in Arabidopsis thaliana (Mouse-ear cress).